Here is a 503-residue protein sequence, read N- to C-terminus: MEFSVKSGSPEKQRSACIVVGVFEPRRLSPIAEQLDKISDGYISALLRRGELEGKPGQTLLLHHVPNVLSERILLIGCGKERELDERQYKQVIQKTINTLNDTGSMEAVCFLTELHVKGRNNYWKVRQAVETAKETLYSFDQLKTNKSEPRRPLRKMVFNVPTRRELTSGERAIQHGLAIAAGIKAAKDLGNMPPNICNAAYLASQARQLADSYSKNVITRVIGEQQMRELGMNAYLAVGHGSQNESLMSVIEYKGNPSEDARPIVLVGKGLTFDSGGISIKPSEGMDEMKYDMCGAAAVYGVMRMVAELKLPINVIGVLAGCENMPGGRAYRPGDVLTTMSDQTVEVLNTDAEGRLVLCDVLTYVERFEPEAVIDVATLTGACVIALGHHITGLMSNHNPLAHELIGASEQAGDRAWRLPLGDEFQEQLESNFADMANIGGRPGGAITAGCFLSRFTRKYNWAHLDIAGTAWRSGKAKGATGRPVALLSQFLLNRAGFNGEE.

Residues Lys270 and Asp275 each coordinate Mn(2+). Lys282 is a catalytic residue. Positions 293, 352, and 354 each coordinate Mn(2+). The active site involves Arg356.

This sequence belongs to the peptidase M17 family. Requires Mn(2+) as cofactor.

The protein localises to the cytoplasm. The enzyme catalyses Release of an N-terminal amino acid, Xaa-|-Yaa-, in which Xaa is preferably Leu, but may be other amino acids including Pro although not Arg or Lys, and Yaa may be Pro. Amino acid amides and methyl esters are also readily hydrolyzed, but rates on arylamides are exceedingly low.. It catalyses the reaction Release of an N-terminal amino acid, preferentially leucine, but not glutamic or aspartic acids.. Presumably involved in the processing and regular turnover of intracellular proteins. Catalyzes the removal of unsubstituted N-terminal amino acids from various peptides. The sequence is that of Probable cytosol aminopeptidase from Salmonella typhi.